A 121-amino-acid polypeptide reads, in one-letter code: MARIAGVNIPNHQHTVIGLTAIFGIGTTRAHQICKTTGVAIDKKVKDLIDADLEKLRDEVGKFVTEGDLRREVTMSIKRLMDLGCYRGVRHRKDLPVRGQRTKTNARTRKGPRKSGVQLKK.

The segment at 94–121 (DLPVRGQRTKTNARTRKGPRKSGVQLKK) is disordered. The segment covering 100-121 (QRTKTNARTRKGPRKSGVQLKK) has biased composition (basic residues).

Belongs to the universal ribosomal protein uS13 family. In terms of assembly, part of the 30S ribosomal subunit. Forms a loose heterodimer with protein S19. Forms two bridges to the 50S subunit in the 70S ribosome.

Its function is as follows. Located at the top of the head of the 30S subunit, it contacts several helices of the 16S rRNA. In the 70S ribosome it contacts the 23S rRNA (bridge B1a) and protein L5 of the 50S subunit (bridge B1b), connecting the 2 subunits; these bridges are implicated in subunit movement. Contacts the tRNAs in the A and P-sites. This is Small ribosomal subunit protein uS13 from Polynucleobacter necessarius subsp. necessarius (strain STIR1).